Here is a 423-residue protein sequence, read N- to C-terminus: Adenylosuccinate synthetase (423 aa).

Residues 11 to 17 (GDEGKGK) and 39 to 41 (GHT) each bind GTP. Asp-12 (proton acceptor) is an active-site residue. Asp-12 and Gly-39 together coordinate Mg(2+). Residues 12-15 (DEGK), 37-40 (NAGH), Thr-127, Arg-141, Gln-223, Thr-238, and Arg-302 contribute to the IMP site. Catalysis depends on His-40, which acts as the Proton donor. Position 298-304 (298-304 (TTTGRSR)) interacts with substrate. Residues Arg-304, 330–332 (KLD), and 412–414 (SVG) contribute to the GTP site.

Belongs to the adenylosuccinate synthetase family. In terms of assembly, homodimer. Mg(2+) is required as a cofactor.

The protein resides in the cytoplasm. The enzyme catalyses IMP + L-aspartate + GTP = N(6)-(1,2-dicarboxyethyl)-AMP + GDP + phosphate + 2 H(+). It functions in the pathway purine metabolism; AMP biosynthesis via de novo pathway; AMP from IMP: step 1/2. In terms of biological role, plays an important role in the de novo pathway of purine nucleotide biosynthesis. Catalyzes the first committed step in the biosynthesis of AMP from IMP. The sequence is that of Adenylosuccinate synthetase from Methanococcoides burtonii (strain DSM 6242 / NBRC 107633 / OCM 468 / ACE-M).